The sequence spans 194 residues: MRKWILTWILPTLLYRSCFHIICLVGTISLACNDMTPEQMATNVNCSSPERHTRSYDYMEGGDIRVRRLFCRTQWYLRIDKRGKVKGTQEMKNSYNIMEIRTVAVGIVAIKGVESEYYLAMNKEGKLYAKKECNEDCNFKELILENHYNTYASAKWTHSGGEMFVALNQKGVPVRGKKTKKEQKTAHFLPMAIT.

A signal peptide spans 1–31 (MRKWILTWILPTLLYRSCFHIICLVGTISLA). N-linked (GlcNAc...) asparagine glycosylation is present at Asn45.

This sequence belongs to the heparin-binding growth factors family. Interacts with FGFBP1. Interacts with FGFR2. Affinity between fibroblast growth factors (FGFs) and their receptors is increased by heparan sulfate glycosaminoglycans that function as coreceptors.

It is found in the secreted. Functionally, plays an important role in the regulation of embryonic development, cell proliferation and cell differentiation. Required for normal branching morphogenesis. Growth factor active on keratinocytes. Possible major paracrine effector of normal epithelial cell proliferation. This is Fibroblast growth factor 7 (FGF7) from Canis lupus familiaris (Dog).